We begin with the raw amino-acid sequence, 211 residues long: uncharacterized protein (211 aa).

Disordered regions lie at residues 45–74 (RSCG…GALS) and 147–211 (AETR…WEEP). Over residues 48-71 (GRSSTGGCSPCSGPGPSSPRTSRG) the composition is skewed to low complexity. Residues 195–205 (DSGSIKMSENE) are compositionally biased toward polar residues.

This is an uncharacterized protein from Homo sapiens (Human).